A 341-amino-acid polypeptide reads, in one-letter code: Methionine import ATP-binding protein MetN 1 (341 aa).

One can recognise an ABC transporter domain in the interval isoleucine 2–valine 241. Glycine 38 to serine 45 lines the ATP pocket.

The protein belongs to the ABC transporter superfamily. Methionine importer (TC 3.A.1.24) family. The complex is composed of two ATP-binding proteins (MetN), two transmembrane proteins (MetI) and a solute-binding protein (MetQ).

The protein resides in the cell membrane. The catalysed reaction is L-methionine(out) + ATP + H2O = L-methionine(in) + ADP + phosphate + H(+). The enzyme catalyses D-methionine(out) + ATP + H2O = D-methionine(in) + ADP + phosphate + H(+). Part of the ABC transporter complex MetNIQ involved in methionine import. Responsible for energy coupling to the transport system. The sequence is that of Methionine import ATP-binding protein MetN 1 from Staphylococcus aureus (strain MRSA252).